The primary structure comprises 215 residues: NADH-quinone oxidoreductase subunit C (215 aa).

It belongs to the complex I 30 kDa subunit family. As to quaternary structure, NDH-1 is composed of 14 different subunits. Subunits NuoB, C, D, E, F, and G constitute the peripheral sector of the complex.

Its subcellular location is the cell inner membrane. The catalysed reaction is a quinone + NADH + 5 H(+)(in) = a quinol + NAD(+) + 4 H(+)(out). Functionally, NDH-1 shuttles electrons from NADH, via FMN and iron-sulfur (Fe-S) centers, to quinones in the respiratory chain. The immediate electron acceptor for the enzyme in this species is believed to be ubiquinone. Couples the redox reaction to proton translocation (for every two electrons transferred, four hydrogen ions are translocated across the cytoplasmic membrane), and thus conserves the redox energy in a proton gradient. The chain is NADH-quinone oxidoreductase subunit C from Methylobacterium radiotolerans (strain ATCC 27329 / DSM 1819 / JCM 2831 / NBRC 15690 / NCIMB 10815 / 0-1).